The sequence spans 602 residues: Pentatricopeptide repeat-containing protein At3g04760, chloroplastic (602 aa).

The transit peptide at 1-78 (MTPLSSELVG…TDATLPTERR (78 aa)) directs the protein to the chloroplast. Residues 42-64 (FSNSNPNNDNGRSFSSSGARNLQ) are compositionally biased toward polar residues. Residues 42-85 (FSNSNPNNDNGRSFSSSGARNLQTTTTTDATLPTERRQQHSQSL) form a disordered region. Over residues 65-74 (TTTTTDATLP) the composition is skewed to low complexity. PPR repeat units lie at residues 88-122 (RDTQ…GYNP), 123-153 (DVIL…LEKF), 157-191 (DVFA…DFSP), 192-226 (DTVT…NCQP), 227-261 (TVIT…GLKP), 262-296 (DMFT…GCEP), 297-331 (DVIS…KCDP), 332-366 (NVVT…GLTP), 367-401 (DAYS…GCLP), 402-436 (DIVN…GCSP), 437-471 (NSSS…GIDP), 472-506 (DEIT…EFHP), 507-541 (SVVT…GCRP), and 542-576 (NETT…DAIS).

This sequence belongs to the PPR family. P subfamily.

The protein resides in the plastid. Its subcellular location is the chloroplast. The chain is Pentatricopeptide repeat-containing protein At3g04760, chloroplastic from Arabidopsis thaliana (Mouse-ear cress).